The chain runs to 351 residues: Geranylgeranyl pyrophosphate synthase (351 aa).

Isopentenyl diphosphate is bound by residues Lys-55, Arg-58, and Gln-93. Positions 100 and 104 each coordinate Mg(2+). A dimethylallyl diphosphate-binding site is contributed by Arg-109. Arg-110 is a binding site for isopentenyl diphosphate. 5 residues coordinate dimethylallyl diphosphate: Lys-196, Thr-197, Gln-236, Lys-253, and Lys-262.

Belongs to the FPP/GGPP synthase family. Interacts with fps1. Mg(2+) is required as a cofactor.

Its subcellular location is the cytoplasm. The protein localises to the nucleus. It carries out the reaction isopentenyl diphosphate + dimethylallyl diphosphate = (2E)-geranyl diphosphate + diphosphate. The enzyme catalyses isopentenyl diphosphate + (2E)-geranyl diphosphate = (2E,6E)-farnesyl diphosphate + diphosphate. The catalysed reaction is isopentenyl diphosphate + (2E,6E)-farnesyl diphosphate = (2E,6E,10E)-geranylgeranyl diphosphate + diphosphate. Its pathway is isoprenoid biosynthesis; farnesyl diphosphate biosynthesis; farnesyl diphosphate from geranyl diphosphate and isopentenyl diphosphate: step 1/1. The protein operates within isoprenoid biosynthesis; geranyl diphosphate biosynthesis; geranyl diphosphate from dimethylallyl diphosphate and isopentenyl diphosphate: step 1/1. It functions in the pathway isoprenoid biosynthesis; geranylgeranyl diphosphate biosynthesis; geranylgeranyl diphosphate from farnesyl diphosphate and isopentenyl diphosphate: step 1/1. In terms of biological role, catalyzes the trans-addition of the 3 molecules of IPP onto DMAPP to form geranylgeranyl pyrophosphate. Required for the membrane attachment of ypt7 and rhb1. May be involved in vesicle trafficking and protein sorting. Required for forespore membrane formation. The polypeptide is Geranylgeranyl pyrophosphate synthase (spo9) (Schizosaccharomyces pombe (strain 972 / ATCC 24843) (Fission yeast)).